We begin with the raw amino-acid sequence, 460 residues long: Serine--tRNA ligase (460 aa).

242-244 contributes to the L-serine binding site; sequence TAE. Residues 273-275 and Val-289 each bind ATP; that span reads RRE. Residue Glu-296 participates in L-serine binding. 369–372 contacts ATP; the sequence is EVSS. Ser-405 lines the L-serine pocket.

Belongs to the class-II aminoacyl-tRNA synthetase family. Type-1 seryl-tRNA synthetase subfamily. As to quaternary structure, homodimer. The tRNA molecule binds across the dimer.

The protein resides in the cytoplasm. The catalysed reaction is tRNA(Ser) + L-serine + ATP = L-seryl-tRNA(Ser) + AMP + diphosphate + H(+). The enzyme catalyses tRNA(Sec) + L-serine + ATP = L-seryl-tRNA(Sec) + AMP + diphosphate + H(+). It functions in the pathway aminoacyl-tRNA biosynthesis; selenocysteinyl-tRNA(Sec) biosynthesis; L-seryl-tRNA(Sec) from L-serine and tRNA(Sec): step 1/1. Functionally, catalyzes the attachment of serine to tRNA(Ser). Is also able to aminoacylate tRNA(Sec) with serine, to form the misacylated tRNA L-seryl-tRNA(Sec), which will be further converted into selenocysteinyl-tRNA(Sec). This chain is Serine--tRNA ligase, found in Haloquadratum walsbyi (strain DSM 16790 / HBSQ001).